Here is a 502-residue protein sequence, read N- to C-terminus: Probable cytosol aminopeptidase (502 aa).

2 residues coordinate Mn(2+): lysine 270 and aspartate 275. Lysine 282 is an active-site residue. 3 residues coordinate Mn(2+): aspartate 293, aspartate 352, and glutamate 354. Residue arginine 356 is part of the active site.

Belongs to the peptidase M17 family. Mn(2+) serves as cofactor.

The protein localises to the cytoplasm. The catalysed reaction is Release of an N-terminal amino acid, Xaa-|-Yaa-, in which Xaa is preferably Leu, but may be other amino acids including Pro although not Arg or Lys, and Yaa may be Pro. Amino acid amides and methyl esters are also readily hydrolyzed, but rates on arylamides are exceedingly low.. It catalyses the reaction Release of an N-terminal amino acid, preferentially leucine, but not glutamic or aspartic acids.. Functionally, presumably involved in the processing and regular turnover of intracellular proteins. Catalyzes the removal of unsubstituted N-terminal amino acids from various peptides. This is Probable cytosol aminopeptidase from Desulfotalea psychrophila (strain LSv54 / DSM 12343).